The chain runs to 121 residues: DNA-directed RNA polymerase subunit omega (121 aa).

Belongs to the RNA polymerase subunit omega family. The RNAP catalytic core consists of 2 alpha, 1 beta, 1 beta' and 1 omega subunit. When a sigma factor is associated with the core the holoenzyme is formed, which can initiate transcription.

The catalysed reaction is RNA(n) + a ribonucleoside 5'-triphosphate = RNA(n+1) + diphosphate. In terms of biological role, promotes RNA polymerase assembly. Latches the N- and C-terminal regions of the beta' subunit thereby facilitating its interaction with the beta and alpha subunits. The protein is DNA-directed RNA polymerase subunit omega of Syntrophobacter fumaroxidans (strain DSM 10017 / MPOB).